The following is a 545-amino-acid chain: CTP synthase (545 aa).

The segment at 1–265 is amidoligase domain; the sequence is MSKYIFVTGG…LVPIAKQLDL (265 aa). CTP is bound at residue Ser13. Residue Ser13 coordinates UTP. Residues 14 to 19 and Asp71 each bind ATP; that span reads SLGKGI. Mg(2+)-binding residues include Asp71 and Glu139. CTP contacts are provided by residues 146-148, 186-191, and Lys222; these read DIE and KTKPTQ. Residues 186-191 and Lys222 contribute to the UTP site; that span reads KTKPTQ. Residues 290-544 enclose the Glutamine amidotransferase type-1 domain; that stretch reads KIAFVGKYLQ…VENAYKCQRS (255 aa). Residue Gly355 coordinates L-glutamine. Cys382 (nucleophile; for glutamine hydrolysis) is an active-site residue. Residues 383-386, Glu406, and Arg473 contribute to the L-glutamine site; that span reads LGMQ. Active-site residues include His517 and Glu519.

The protein belongs to the CTP synthase family. As to quaternary structure, homotetramer.

The catalysed reaction is UTP + L-glutamine + ATP + H2O = CTP + L-glutamate + ADP + phosphate + 2 H(+). It catalyses the reaction L-glutamine + H2O = L-glutamate + NH4(+). It carries out the reaction UTP + NH4(+) + ATP = CTP + ADP + phosphate + 2 H(+). It participates in pyrimidine metabolism; CTP biosynthesis via de novo pathway; CTP from UDP: step 2/2. With respect to regulation, allosterically activated by GTP, when glutamine is the substrate; GTP has no effect on the reaction when ammonia is the substrate. The allosteric effector GTP functions by stabilizing the protein conformation that binds the tetrahedral intermediate(s) formed during glutamine hydrolysis. Inhibited by the product CTP, via allosteric rather than competitive inhibition. In terms of biological role, catalyzes the ATP-dependent amination of UTP to CTP with either L-glutamine or ammonia as the source of nitrogen. Regulates intracellular CTP levels through interactions with the four ribonucleotide triphosphates. The chain is CTP synthase from Nautilia profundicola (strain ATCC BAA-1463 / DSM 18972 / AmH).